A 118-amino-acid chain; its full sequence is Ribonuclease P protein component (118 aa).

It belongs to the RnpA family. Consists of a catalytic RNA component (M1 or rnpB) and a protein subunit.

The enzyme catalyses Endonucleolytic cleavage of RNA, removing 5'-extranucleotides from tRNA precursor.. Its function is as follows. RNaseP catalyzes the removal of the 5'-leader sequence from pre-tRNA to produce the mature 5'-terminus. It can also cleave other RNA substrates such as 4.5S RNA. The protein component plays an auxiliary but essential role in vivo by binding to the 5'-leader sequence and broadening the substrate specificity of the ribozyme. This is Ribonuclease P protein component from Rickettsia peacockii (strain Rustic).